A 210-amino-acid polypeptide reads, in one-letter code: Na(+)-translocating NADH-quinone reductase subunit D (210 aa).

The next 6 membrane-spanning stretches (helical) occupy residues 42–62 (VVMT…ISTI), 66–86 (IPNS…VIVV), 103–123 (VYVG…AFAM), 131–151 (FMDG…VGAF), 154–174 (LFGS…NGGW), and 178–198 (NGLL…IWAV).

It belongs to the NqrDE/RnfAE family. Composed of six subunits; NqrA, NqrB, NqrC, NqrD, NqrE and NqrF.

It localises to the cell inner membrane. It carries out the reaction a ubiquinone + n Na(+)(in) + NADH + H(+) = a ubiquinol + n Na(+)(out) + NAD(+). Functionally, NQR complex catalyzes the reduction of ubiquinone-1 to ubiquinol by two successive reactions, coupled with the transport of Na(+) ions from the cytoplasm to the periplasm. NqrA to NqrE are probably involved in the second step, the conversion of ubisemiquinone to ubiquinol. The polypeptide is Na(+)-translocating NADH-quinone reductase subunit D (Psychromonas ingrahamii (strain DSM 17664 / CCUG 51855 / 37)).